We begin with the raw amino-acid sequence, 382 residues long: Mannitol-1-phosphate 5-dehydrogenase (382 aa).

3-14 (ALHFGAGNIGRG) contacts NAD(+). Lysine 269 carries the post-translational modification N6-acetyllysine.

Belongs to the mannitol dehydrogenase family.

It catalyses the reaction D-mannitol 1-phosphate + NAD(+) = beta-D-fructose 6-phosphate + NADH + H(+). In Escherichia coli O7:K1 (strain IAI39 / ExPEC), this protein is Mannitol-1-phosphate 5-dehydrogenase.